A 576-amino-acid chain; its full sequence is Interleukin-1 receptor type 1 (576 aa).

A signal peptide spans M1–S19. Residues L20–K338 lie on the Extracellular side of the membrane. Cystine bridges form between C25–C107, C46–C99, and C145–C199. Ig-like C2-type domains are found at residues C25–T115, P121–T213, and P229–Q329. Residues N63, N103, N174, N236, N252, N266, and N300 are each glycosylated (N-linked (GlcNAc...) asparagine). A disulfide bridge links C251 with C315. A helical membrane pass occupies residues N339 to Y359. Over K360–G576 the chain is Cytoplasmic. The region spanning K386 to M541 is the TIR domain. Residue E473 is part of the active site. Y499 bears the Phosphotyrosine mark. Position 556 is a phosphothreonine; by PKC (T556).

This sequence belongs to the interleukin-1 receptor family. In terms of assembly, the interleukin-1 receptor complex is a heterodimer of IL1R1 and IL1RAP. Interacts with PIK3R1. Interacts with IL1A. Post-translationally, a soluble form (sIL1R1) is probably produced by proteolytic cleavage at the cell surface (shedding). Rapidly phosphorylated on Tyr-499 in response to IL-1, which creates a SH2 binding site for the PI 3-kinase regulatory subunit PIK3R1. In terms of tissue distribution, isoform 2 is expressed in various brain tissues.

The protein resides in the membrane. It is found in the cell membrane. It localises to the secreted. It catalyses the reaction NAD(+) + H2O = ADP-D-ribose + nicotinamide + H(+). Receptor for IL1A, IL1B and IL1RN. After binding to interleukin-1 associates with the coreceptor IL1RAP to form the high affinity interleukin-1 receptor complex which mediates interleukin-1-dependent activation of NF-kappa-B, MAPK and other pathways. Signaling involves the recruitment of adapter molecules such as TOLLIP, MYD88, and IRAK1 or IRAK2 via the respective TIR domains of the receptor/coreceptor subunits. Binds ligands with comparable affinity and binding of antagonist IL1RN prevents association with IL1RAP to form a signaling complex. Involved in IL1B-mediated costimulation of IFNG production from T-helper 1 (Th1) cells. Its function is as follows. Unable to mediate canonical IL-1 signaling. Cooperates with IL1RAP isoform 3 to mediate IL1B-induced neuronal activity including IL1B-potentiated NMDA-induced calcium influx mediated by Akt kinase activation. The chain is Interleukin-1 receptor type 1 (Il1r1) from Mus musculus (Mouse).